The following is a 44-amino-acid chain: Large ribosomal subunit protein bL34 (44 aa).

Residues 1–26 (MKMTFQPKKRQRAKVHGFRQRMKTAG) are disordered. Residues 7 to 22 (PKKRQRAKVHGFRQRM) are compositionally biased toward basic residues.

This sequence belongs to the bacterial ribosomal protein bL34 family.

The polypeptide is Large ribosomal subunit protein bL34 (Agathobacter rectalis (strain ATCC 33656 / DSM 3377 / JCM 17463 / KCTC 5835 / VPI 0990) (Eubacterium rectale)).